The primary structure comprises 845 residues: DNA replication licensing factor MCM7 (845 aa).

The MCM domain maps to 410–617; the sequence is VYNRLAKSIA…DDEKLAEHVT (208 aa). Positions 423, 463, 465, 466, 467, 568, 593, and 687 each coordinate ATP. The Arginine finger motif lies at 592 to 595; the sequence is SRFD. The residue at position 811 (Thr811) is a Phosphothreonine. The tract at residues 812 to 845 is disordered; it reads DQEDSLVSTPKLAPQTTASANVSAQDSDIDLQDA. Ser819 carries the post-translational modification Phosphoserine. A compositionally biased stretch (polar residues) spans 825 to 837; that stretch reads PQTTASANVSAQD. At Ser838 the chain carries Phosphoserine.

Belongs to the MCM family. As to quaternary structure, component of the MCM2-7 complex. The complex forms a toroidal hexameric ring with the proposed subunit order MCM2-MCM6-MCM4-MCM7-MCM3-MCM5; loaded onto DNA, forms a head-head double hexamer. Interacts with CSM1 and MCM10.

Its subcellular location is the cytoplasm. It localises to the nucleus. It catalyses the reaction ATP + H2O = ADP + phosphate + H(+). Its function is as follows. Acts as a component of the MCM2-7 complex (MCM complex) which is the putative replicative helicase essential for 'once per cell cycle' DNA replication initiation and elongation in eukaryotic cells. Core component of CDC45-MCM-GINS (CMG) helicase, the molecular machine that unwinds template DNA during replication, and around which the replisome is built. The active ATPase sites in the MCM2-7 ring are formed through the interaction surfaces of two neighboring subunits such that a critical structure of a conserved arginine finger motif is provided in trans relative to the ATP-binding site of the Walker A box of the adjacent subunit. The six ATPase active sites, however, are likely to contribute differentially to the complex helicase activity. Once loaded onto DNA, double hexamers can slide on dsDNA in the absence of ATPase activity. In Saccharomyces cerevisiae (strain ATCC 204508 / S288c) (Baker's yeast), this protein is DNA replication licensing factor MCM7 (MCM7).